We begin with the raw amino-acid sequence, 716 residues long: ATP-dependent DNA helicase DinG (716 aa).

A Helicase ATP-binding domain is found at 17-294 (ALQEQIPDFI…TCMEQFRPKT (278 aa)). Residue 54-61 (APTGVGKT) coordinates ATP. Cys-120 is a [4Fe-4S] cluster binding site. The DEAH box signature appears at 131–134 (EPTQ). Positions 194, 199, and 205 each coordinate [4Fe-4S] cluster. A DEAH box motif is present at residues 248 to 251 (DEGH). A Helicase C-terminal domain is found at 517–698 (HIAEMAAFFR…VFPIEQPEVP (182 aa)).

It belongs to the helicase family. DinG subfamily. Type 1 sub-subfamily. [4Fe-4S] cluster serves as cofactor.

The enzyme catalyses Couples ATP hydrolysis with the unwinding of duplex DNA at the replication fork by translocating in the 5'-3' direction. This creates two antiparallel DNA single strands (ssDNA). The leading ssDNA polymer is the template for DNA polymerase III holoenzyme which synthesizes a continuous strand.. It catalyses the reaction ATP + H2O = ADP + phosphate + H(+). In terms of biological role, DNA-dependent ATPase and 5'-3' DNA helicase. Unwinds D-loops, R-loops, forked DNA and G-quadruplex DNA. This is ATP-dependent DNA helicase DinG from Escherichia coli O157:H7.